The primary structure comprises 115 residues: NADH-ubiquinone oxidoreductase chain 3 (115 aa).

Transmembrane regions (helical) follow at residues 4–24 (ALTLFTNTALASLLVLIAFWL), 55–75 (FFLVAITFLLFDLEIALLLPL), and 84–104 (LTTMLTMALLLISLLAASLAY).

This sequence belongs to the complex I subunit 3 family. As to quaternary structure, core subunit of respiratory chain NADH dehydrogenase (Complex I) which is composed of 45 different subunits. Interacts with TMEM186. Interacts with TMEM242.

It localises to the mitochondrion inner membrane. It carries out the reaction a ubiquinone + NADH + 5 H(+)(in) = a ubiquinol + NAD(+) + 4 H(+)(out). Core subunit of the mitochondrial membrane respiratory chain NADH dehydrogenase (Complex I) which catalyzes electron transfer from NADH through the respiratory chain, using ubiquinone as an electron acceptor. Essential for the catalytic activity of complex I. In Halichoerus grypus (Gray seal), this protein is NADH-ubiquinone oxidoreductase chain 3.